The sequence spans 161 residues: Regulatory protein RecX (161 aa).

It belongs to the RecX family.

The protein localises to the cytoplasm. Its function is as follows. Modulates RecA activity. The chain is Regulatory protein RecX from Halorhodospira halophila (strain DSM 244 / SL1) (Ectothiorhodospira halophila (strain DSM 244 / SL1)).